Here is a 296-residue protein sequence, read N- to C-terminus: MGPTASGKTALALELAEKHNCEIISVDSALIYRGMDIGSAKPSAEELARGPHRLIDIRDPAESYSAADFRADALREIEQIISMGKTPVLVGGTMMYFKALLEGLSPLPSADEAIRADIQAEADANGWEALHEQLREIDPVSAERIHPNDPQRLSRAIEVYRISGKSLTELTQTKSAPLPYDVVQFAIAPRERKVLHELIGQRFRIMLEQGFIDEVAQLKARGDLHLDLPSMRCVGYRQCWQYLDGEFDYDTMVEKAVAATRQLAKRQLTWLRSWPELNWLESGAEGNLVTLMRQCR.

2 to 9 (GPTASGKT) contacts ATP. A substrate-binding site is contributed by 4–9 (TASGKT). Interaction with substrate tRNA stretches follow at residues 27–30 (DSAL), 151–155 (QRLSR), and 232–237 (RCVGYR).

Belongs to the IPP transferase family. As to quaternary structure, monomer. The cofactor is Mg(2+).

The catalysed reaction is adenosine(37) in tRNA + dimethylallyl diphosphate = N(6)-dimethylallyladenosine(37) in tRNA + diphosphate. Functionally, catalyzes the transfer of a dimethylallyl group onto the adenine at position 37 in tRNAs that read codons beginning with uridine, leading to the formation of N6-(dimethylallyl)adenosine (i(6)A). In Shewanella sp. (strain MR-4), this protein is tRNA dimethylallyltransferase.